The chain runs to 264 residues: Potassium channel regulatory protein (264 aa).

The region spanning Asp5–Ser74 is the BTB domain.

In terms of assembly, can form homooligomers. Interacts with KCNA1 (via cytoplasmic N-terminal domain) and KCNA4.

The protein resides in the endoplasmic reticulum. Functionally, inhibits potassium fluxes in cells. May regulate Kv1 family channel proteins by retaining a fraction of channels in endomembranes. The polypeptide is Potassium channel regulatory protein (Kcnrg) (Mus musculus (Mouse)).